The primary structure comprises 226 residues: Glutathione S-transferase kappa 1 (226 aa).

Residues 15–17 (SPY), Asn53, and 199–200 (SD) each bind glutathione.

This sequence belongs to the GST superfamily. Kappa family.

The enzyme catalyses RX + glutathione = an S-substituted glutathione + a halide anion + H(+). The protein is Glutathione S-transferase kappa 1 (gstk-1) of Caenorhabditis elegans.